Reading from the N-terminus, the 663-residue chain is UvrABC system protein B (663 aa).

The span at 1–10 shows a compositional bias: basic and acidic residues; the sequence is MIDKRDDKPF. Residues 1 to 23 are disordered; that stretch reads MIDKRDDKPFKLKSKYKPSGDQP. Positions 31-418 constitute a Helicase ATP-binding domain; that stretch reads DNIEGGEKAQ…TNTIIEQIIR (388 aa). 44 to 51 contributes to the ATP binding site; the sequence is GATGTGKT. The Beta-hairpin motif lies at 97-120; the sequence is YYDYYQPEAYVPSSDTYIEKDSSV. The 167-residue stretch at 435 to 601 folds into the Helicase C-terminal domain; the sequence is QMDDLLGEIN…TIKKDIRGLI (167 aa). The UVR domain maps to 627–662; the sequence is KEAINALQKQMQEAAELLDFELAAQMRDLILELKLM.

The protein belongs to the UvrB family. In terms of assembly, forms a heterotetramer with UvrA during the search for lesions. Interacts with UvrC in an incision complex.

It localises to the cytoplasm. The UvrABC repair system catalyzes the recognition and processing of DNA lesions. A damage recognition complex composed of 2 UvrA and 2 UvrB subunits scans DNA for abnormalities. Upon binding of the UvrA(2)B(2) complex to a putative damaged site, the DNA wraps around one UvrB monomer. DNA wrap is dependent on ATP binding by UvrB and probably causes local melting of the DNA helix, facilitating insertion of UvrB beta-hairpin between the DNA strands. Then UvrB probes one DNA strand for the presence of a lesion. If a lesion is found the UvrA subunits dissociate and the UvrB-DNA preincision complex is formed. This complex is subsequently bound by UvrC and the second UvrB is released. If no lesion is found, the DNA wraps around the other UvrB subunit that will check the other stand for damage. This Streptococcus pyogenes serotype M6 (strain ATCC BAA-946 / MGAS10394) protein is UvrABC system protein B.